A 526-amino-acid polypeptide reads, in one-letter code: Peptide chain release factor 3 (526 aa).

In terms of domain architecture, tr-type G spans 9–277; that stretch reads DKRRTFAIIS…GIVEWAPVPQ (269 aa). GTP-binding positions include 18–25, 86–90, and 140–143; these read SHPDAGKT, DTPGH, and NKLD.

The protein belongs to the TRAFAC class translation factor GTPase superfamily. Classic translation factor GTPase family. PrfC subfamily.

It localises to the cytoplasm. In terms of biological role, increases the formation of ribosomal termination complexes and stimulates activities of RF-1 and RF-2. It binds guanine nucleotides and has strong preference for UGA stop codons. It may interact directly with the ribosome. The stimulation of RF-1 and RF-2 is significantly reduced by GTP and GDP, but not by GMP. The chain is Peptide chain release factor 3 from Shewanella pealeana (strain ATCC 700345 / ANG-SQ1).